Consider the following 603-residue polypeptide: Elongation factor 4 (603 aa).

A tr-type G domain is found at 7 to 191 (DNIRNFSIVA…AIVTRLPPPK (185 aa)). Residues 19-24 (DHGKST) and 138-141 (NKVD) contribute to the GTP site.

Belongs to the TRAFAC class translation factor GTPase superfamily. Classic translation factor GTPase family. LepA subfamily.

Its subcellular location is the cell inner membrane. It carries out the reaction GTP + H2O = GDP + phosphate + H(+). Functionally, required for accurate and efficient protein synthesis under certain stress conditions. May act as a fidelity factor of the translation reaction, by catalyzing a one-codon backward translocation of tRNAs on improperly translocated ribosomes. Back-translocation proceeds from a post-translocation (POST) complex to a pre-translocation (PRE) complex, thus giving elongation factor G a second chance to translocate the tRNAs correctly. Binds to ribosomes in a GTP-dependent manner. This is Elongation factor 4 from Rhodopseudomonas palustris (strain ATCC BAA-98 / CGA009).